The chain runs to 768 residues: U-box domain-containing protein 45 (768 aa).

The U-box domain occupies 278 to 352; the sequence is VPPEELRCPI…SSWCEQNGVQ (75 aa). ARM repeat units follow at residues 454-497, 500-540, 542-579, 581-620, and 623-662; these read EEAR…NLAV, NRNK…CLEE, KPVI…HLST, PPNI…NLVL, and AGKD…ILCN.

As to quaternary structure, binds to SD129.

The catalysed reaction is S-ubiquitinyl-[E2 ubiquitin-conjugating enzyme]-L-cysteine + [acceptor protein]-L-lysine = [E2 ubiquitin-conjugating enzyme]-L-cysteine + N(6)-ubiquitinyl-[acceptor protein]-L-lysine.. The protein operates within protein modification; protein ubiquitination. Functionally, functions as an E3 ubiquitin ligase. This is U-box domain-containing protein 45 (PUB45) from Arabidopsis thaliana (Mouse-ear cress).